The sequence spans 359 residues: UDP-N-acetylglucosamine--N-acetylmuramyl-(pentapeptide) pyrophosphoryl-undecaprenol N-acetylglucosamine transferase (359 aa).

Residues 13-15 (TAG), Asn125, Arg161, Ser193, Ile241, and Gln285 contribute to the UDP-N-acetyl-alpha-D-glucosamine site.

Belongs to the glycosyltransferase 28 family. MurG subfamily.

Its subcellular location is the cell membrane. It carries out the reaction di-trans,octa-cis-undecaprenyl diphospho-N-acetyl-alpha-D-muramoyl-L-alanyl-D-glutamyl-meso-2,6-diaminopimeloyl-D-alanyl-D-alanine + UDP-N-acetyl-alpha-D-glucosamine = di-trans,octa-cis-undecaprenyl diphospho-[N-acetyl-alpha-D-glucosaminyl-(1-&gt;4)]-N-acetyl-alpha-D-muramoyl-L-alanyl-D-glutamyl-meso-2,6-diaminopimeloyl-D-alanyl-D-alanine + UDP + H(+). The protein operates within cell wall biogenesis; peptidoglycan biosynthesis. Functionally, cell wall formation. Catalyzes the transfer of a GlcNAc subunit on undecaprenyl-pyrophosphoryl-MurNAc-pentapeptide (lipid intermediate I) to form undecaprenyl-pyrophosphoryl-MurNAc-(pentapeptide)GlcNAc (lipid intermediate II). The chain is UDP-N-acetylglucosamine--N-acetylmuramyl-(pentapeptide) pyrophosphoryl-undecaprenol N-acetylglucosamine transferase from Corynebacterium diphtheriae (strain ATCC 700971 / NCTC 13129 / Biotype gravis).